We begin with the raw amino-acid sequence, 203 residues long: Translation initiation factor IF-3 (203 aa).

Residues 172-182 (EAPKNEKKTKE) show a composition bias toward basic and acidic residues. The disordered stretch occupies residues 172 to 203 (EAPKNEKKTKENNPPFNRINLMKGENHAKNED).

Belongs to the IF-3 family. In terms of assembly, monomer.

The protein localises to the cytoplasm. In terms of biological role, IF-3 binds to the 30S ribosomal subunit and shifts the equilibrium between 70S ribosomes and their 50S and 30S subunits in favor of the free subunits, thus enhancing the availability of 30S subunits on which protein synthesis initiation begins. The sequence is that of Translation initiation factor IF-3 from Helicobacter pylori (strain J99 / ATCC 700824) (Campylobacter pylori J99).